The following is a 725-amino-acid chain: DNA replication licensing factor MCM7 (725 aa).

Positions 333-538 constitute an MCM domain; that stretch reads IYNKLARSLA…METDLEMARH (206 aa). ATP is bound at residue 383 to 390; it reads GDPGVAKS. Residues 515–518 carry the Arginine finger motif; the sequence is SRFD.

It belongs to the MCM family. As to quaternary structure, component of the minichromosome maintenance (MCM) complex, a heterotetramer composed of MCM2, MCM3, MCM4, MCM5, MCM6 and MCM7.

The protein localises to the nucleus. It carries out the reaction ATP + H2O = ADP + phosphate + H(+). Probable component of the MCM2-7 complex (MCM complex) that may function as a DNA helicase and which is essential to undergo a single round of replication initiation and elongation per cell cycle in eukaryotic cells. The sequence is that of DNA replication licensing factor MCM7 (MCM7) from Oryza sativa subsp. indica (Rice).